The chain runs to 355 residues: Isopentenyl-diphosphate delta-isomerase (355 aa).

9–10 (RK) contacts substrate. FMN is bound by residues 67–69 (AIT), S97, and N125. 97–99 (SQR) contacts substrate. Q161 contacts substrate. E162 contacts Mg(2+). Residues K197, T227, 276–278 (GIR), and 297–298 (AL) contribute to the FMN site.

This sequence belongs to the IPP isomerase type 2 family. As to quaternary structure, homooctamer. Dimer of tetramers. It depends on FMN as a cofactor. NADPH is required as a cofactor. The cofactor is Mg(2+).

The protein localises to the cytoplasm. The catalysed reaction is isopentenyl diphosphate = dimethylallyl diphosphate. Its function is as follows. Involved in the biosynthesis of isoprenoids. Catalyzes the 1,3-allylic rearrangement of the homoallylic substrate isopentenyl (IPP) to its allylic isomer, dimethylallyl diphosphate (DMAPP). The sequence is that of Isopentenyl-diphosphate delta-isomerase from Methanococcus maripaludis (strain DSM 14266 / JCM 13030 / NBRC 101832 / S2 / LL).